A 125-amino-acid polypeptide reads, in one-letter code: Phosphoribosyl-AMP cyclohydrolase (125 aa).

Position 74 (Asp-74) interacts with Mg(2+). A Zn(2+)-binding site is contributed by Cys-75. Residues Asp-76 and Asp-78 each contribute to the Mg(2+) site. Cys-92 and Cys-99 together coordinate Zn(2+).

It belongs to the PRA-CH family. As to quaternary structure, homodimer. Requires Mg(2+) as cofactor. The cofactor is Zn(2+).

The protein resides in the cytoplasm. The catalysed reaction is 1-(5-phospho-beta-D-ribosyl)-5'-AMP + H2O = 1-(5-phospho-beta-D-ribosyl)-5-[(5-phospho-beta-D-ribosylamino)methylideneamino]imidazole-4-carboxamide. The protein operates within amino-acid biosynthesis; L-histidine biosynthesis; L-histidine from 5-phospho-alpha-D-ribose 1-diphosphate: step 3/9. In terms of biological role, catalyzes the hydrolysis of the adenine ring of phosphoribosyl-AMP. The protein is Phosphoribosyl-AMP cyclohydrolase of Geobacter metallireducens (strain ATCC 53774 / DSM 7210 / GS-15).